A 79-amino-acid polypeptide reads, in one-letter code: Protein OPG081 (79 aa).

The Intravirion portion of the chain corresponds to 2–8 (VDAITVL). The chain crosses the membrane as a helical span at residues 9-29 (TAIGITVLMLLMVISGAALIV). Residues 30 to 47 (KELNPNDIFTMQSLKFNR) lie on the Virion surface side of the membrane. A helical membrane pass occupies residues 48–68 (AVTIFKYIGLFIYIPGTIILY). Topologically, residues 69–79 (ATYVKSLLMKS) are intravirion.

This sequence belongs to the orthopoxvirus OPG081 family.

The protein resides in the virion membrane. Functionally, envelope protein. This Vaccinia virus (strain Western Reserve) (VACV) protein is Protein OPG081 (OPG081).